The following is a 719-amino-acid chain: Glycine--tRNA ligase beta subunit (719 aa).

Residues 65–84 (PDREEEIKGPPAKAAFKDGK) form a disordered region.

Belongs to the class-II aminoacyl-tRNA synthetase family. As to quaternary structure, tetramer of two alpha and two beta subunits.

It is found in the cytoplasm. The catalysed reaction is tRNA(Gly) + glycine + ATP = glycyl-tRNA(Gly) + AMP + diphosphate. The sequence is that of Glycine--tRNA ligase beta subunit from Trichodesmium erythraeum (strain IMS101).